Here is a 1312-residue protein sequence, read N- to C-terminus: AT-rich interactive domain-containing protein 4B (1312 aa).

Disordered regions lie at residues 124–166 and 266–306; these read PLTN…EDDR and KTEL…EPFP. Phosphoserine is present on residues S276, S295, and S296. Over residues 277 to 305 the composition is skewed to acidic residues; sequence EAEEEEEEEDDEKEKEDNSSEEEEEIEPF. An ARID domain is found at 306–398; sequence PEERENFLQQ…YLYGFEEYCR (93 aa). Glycyl lysine isopeptide (Lys-Gly) (interchain with G-Cter in SUMO2) cross-links involve residues K429, K440, and K462. 5 disordered regions span residues 458-577, 635-680, 708-894, 909-1212, and 1252-1288; these read EIER…KVQV, IKHR…EMVS, QASE…TTGF, LNNS…NRLP, and SEVA…SITA. Positions 465 to 473 are antigenic epitope; sequence IKPSLGSKK. S483 is subject to Phosphoserine. The span at 483 to 496 shows a compositional bias: basic and acidic residues; that stretch reads SDQEKEVNIKKPED. K517 participates in a covalent cross-link: Glycyl lysine isopeptide (Lys-Gly) (interchain with G-Cter in SUMO2). Acidic residues predominate over residues 532–567; sequence NKEEDEDDEEAEEEEEEEEEEEDEDDDDNNEEEEFE. A Tudor-knot domain is found at 572–624; it reads GMKVQVRYGRGKNQKMYEASIKDSDVEGGEVLYLVHYCGWNVRYDEWIKADKI. The span at 643–656 shows a compositional bias: basic and acidic residues; it reads NKLDKEKDKDEKYS. Phosphoserine is present on residues S666, S675, and S717. Basic and acidic residues-rich tracts occupy residues 722 to 754 and 778 to 787; these read ERGA…KEEQ and SPERLRKDIE. Residues 728-754 adopt a coiled-coil conformation; that stretch reads MDNNGKEESKIDHLTNNRNDLISKEEQ. K751 participates in a covalent cross-link: Glycyl lysine isopeptide (Lys-Gly) (interchain with G-Cter in SUMO2). 2 positions are modified to phosphoserine: S778 and S790. The span at 788–799 shows a compositional bias: acidic residues; it reads VLSEDTDYEEDE. T793 is subject to Phosphothreonine. 4 stretches are compositionally biased toward basic and acidic residues: residues 807–816, 828–852, 909–927, and 995–1010; these read VKKDTTDKSS, CNTE…KESL, LNNS…RKDV, and KPIE…RKAE. The residue at position 1014 (S1014) is a Phosphoserine. A Phosphothreonine modification is found at T1026. Residues 1028–1037 show a composition bias toward low complexity; sequence ESPSSVTVTE. Position 1029 is a phosphoserine (S1029). The segment covering 1038–1047 has biased composition (polar residues); the sequence is GSRQQSSVTV. Basic and acidic residues predominate over residues 1056 to 1065; sequence EEVRSIKSET. Positions 1087 to 1101 are enriched in low complexity; the sequence is SSPAGFDASVSSSSS. An antigenic epitope region spans residues 1130 to 1137; the sequence is KKQKRSHK. The segment covering 1130-1148 has biased composition (basic residues); the sequence is KKQKRSHKATVVNNKKKGK. T1150 carries the phosphothreonine modification. 4 positions are modified to phosphoserine: S1152, S1153, S1155, and S1159. Polar residues predominate over residues 1162–1191; that stretch reads ESITKSQPVKSVSTGMKSHSTKSPARTQSP. A compositionally biased stretch (basic and acidic residues) spans 1196 to 1208; that stretch reads KNGDKDPDLKEPS. A coiled-coil region spans residues 1231 to 1270; it reads ERITILQEKLQEIRKHYLSLKSEVASIDRRRKRLKKKERE. Residues 1272–1288 show a composition bias toward low complexity; sequence AATSSSSSSPSSSSITA.

As to quaternary structure, component of a Sin3A corepressor complex consisting of SIN3A, SAP130, SUDS3/SAP45, SAP180, HDAC1 and HDAC2. Interacts with ARID4A. Interacts with AR. In terms of tissue distribution, highly expressed in the testis and in breast, lung, colon, pancreatic and ovarian cancers. Expressed at low levels in the thymus, prostate and ovary.

The protein localises to the nucleus. It is found in the cytoplasm. In terms of biological role, acts as a transcriptional repressor. May function in the assembly and/or enzymatic activity of the Sin3A corepressor complex or in mediating interactions between the complex and other regulatory complexes. Plays a role in the regulation of epigenetic modifications at the PWS/AS imprinting center near the SNRPN promoter, where it might function as part of a complex with RB1 and ARID4A. Involved in spermatogenesis, together with ARID4A, where it functions as a transcriptional coactivator for AR (androgen receptor) and enhances expression of genes required for sperm maturation. Regulates expression of the tight junction protein CLDN3 in the testis, which is important for integrity of the blood-testis barrier. Plays a role in myeloid homeostasis where it regulates the histone methylation state of bone marrow cells and expression of various genes involved in hematopoiesis. May function as a leukemia suppressor. This chain is AT-rich interactive domain-containing protein 4B (ARID4B), found in Homo sapiens (Human).